The sequence spans 94 residues: Pyrimidine/purine nucleoside phosphorylase 2 (94 aa).

This sequence belongs to the nucleoside phosphorylase PpnP family.

It carries out the reaction a purine D-ribonucleoside + phosphate = a purine nucleobase + alpha-D-ribose 1-phosphate. The catalysed reaction is adenosine + phosphate = alpha-D-ribose 1-phosphate + adenine. The enzyme catalyses cytidine + phosphate = cytosine + alpha-D-ribose 1-phosphate. It catalyses the reaction guanosine + phosphate = alpha-D-ribose 1-phosphate + guanine. It carries out the reaction inosine + phosphate = alpha-D-ribose 1-phosphate + hypoxanthine. The catalysed reaction is thymidine + phosphate = 2-deoxy-alpha-D-ribose 1-phosphate + thymine. The enzyme catalyses uridine + phosphate = alpha-D-ribose 1-phosphate + uracil. It catalyses the reaction xanthosine + phosphate = alpha-D-ribose 1-phosphate + xanthine. Catalyzes the phosphorolysis of diverse nucleosides, yielding D-ribose 1-phosphate and the respective free bases. Can use uridine, adenosine, guanosine, cytidine, thymidine, inosine and xanthosine as substrates. Also catalyzes the reverse reactions. This chain is Pyrimidine/purine nucleoside phosphorylase 2, found in Psychrobacter cryohalolentis (strain ATCC BAA-1226 / DSM 17306 / VKM B-2378 / K5).